A 442-amino-acid chain; its full sequence is tRNA modification GTPase MnmE (442 aa).

Residues R27, E84, and K124 each coordinate (6S)-5-formyl-5,6,7,8-tetrahydrofolate. Residues 221 to 366 (GLHVVIVGAP…LLDALQAFAE (146 aa)) enclose the TrmE-type G domain. GTP contacts are provided by residues 231 to 236 (NAGKSS), 250 to 256 (SKEAGTT), and 275 to 278 (DTAG). The Mg(2+) site is built by S235 and T256. Residue K442 coordinates (6S)-5-formyl-5,6,7,8-tetrahydrofolate.

This sequence belongs to the TRAFAC class TrmE-Era-EngA-EngB-Septin-like GTPase superfamily. TrmE GTPase family. In terms of assembly, homodimer. Heterotetramer of two MnmE and two MnmG subunits. The cofactor is K(+).

Its subcellular location is the cytoplasm. Functionally, exhibits a very high intrinsic GTPase hydrolysis rate. Involved in the addition of a carboxymethylaminomethyl (cmnm) group at the wobble position (U34) of certain tRNAs, forming tRNA-cmnm(5)s(2)U34. In Brucella suis biovar 1 (strain 1330), this protein is tRNA modification GTPase MnmE.